Reading from the N-terminus, the 744-residue chain is Eukaryotic translation initiation factor 3 subunit B (744 aa).

The segment at 1–21 is disordered; that stretch reads MAPSFDHLPDPEEDEYDEEEL. The span at 11-21 shows a compositional bias: acidic residues; that stretch reads PEEDEYDEEEL. The 87-residue stretch at 40–126 folds into the RRM domain; sequence TFVVIDGLPE…HTLRVNKLTD (87 aa). 4 WD repeats span residues 193–232, 234–290, 307–348, and 577–622; these read DRQH…RQKR, AHPF…PLRS, PIKR…LLDK, and ADHY…LREE.

It belongs to the eIF-3 subunit B family. As to quaternary structure, component of the eukaryotic translation initiation factor 3 (eIF-3) complex.

It localises to the cytoplasm. In terms of biological role, RNA-binding component of the eukaryotic translation initiation factor 3 (eIF-3) complex, which is involved in protein synthesis of a specialized repertoire of mRNAs and, together with other initiation factors, stimulates binding of mRNA and methionyl-tRNAi to the 40S ribosome. The eIF-3 complex specifically targets and initiates translation of a subset of mRNAs involved in cell proliferation. This chain is Eukaryotic translation initiation factor 3 subunit B (prt1), found in Botryotinia fuckeliana (strain B05.10) (Noble rot fungus).